The primary structure comprises 678 residues: MSKRNPPVTNIADLVSDSSLDEDSLSFLEELQDPELYFKNDTFSSKSSHSDGTVTGDTLRRQSSGATALERLVSHPRTKNFDLQGNGGQNSALKEVNTPAYQSMHHFEHLITPLPSTNASHSEVSLSAGVNDLNSNSEHDLLPKSVNKTPGSLSISRRRRIGRIGLGPPKRAEYTLTDPSKTSDTKNSTEADEDIEMKSREVSPASNSVAATTLKPLQLHNTPLQTSQEHPKPSFHPSQFESSFSPRVQFDHDVERRASELHSRPVTVFQEPQRSASQPYESHALSPKVAPLFDNSQATPIPKRQQDVVTVANLQFIKLGVVGKGGSSMVYRIFSPDNSRLYALKEVNFINADQTTIQGYKNEIALLRKLSGNDRIIKLYAAEVNDTLGQLNMVMECGETDLANLLMKNMKKPINLNFIRMYWEQMLEAVQVVHDQNIVHSDLKPANFLLVEGNLKLIDFGIAKAIGNDTTNIHRDSHIGTINYMAPEALTDMNAHTNSGVKLVKLGRPSDVWSLGCILYQMVYGRAPFAHLKMIQAIAAIPNEQYHIHFPEVALPANAVQEKEGSLPGVTVGPDLMDVMKRCLERDQRKRLTIPELLVHPFLNPLPSYLTPLAKKPLPVSGHTNNAHPLRLSTEISASQLSMIIERSVELSKHKRLNKELIDSMAYDCVSNLRKMPE.

Disordered regions lie at residues 39–93 (KNDT…NSAL) and 114–209 (LPST…SNSV). Composition is skewed to polar residues over residues 41–66 (DTFS…SSGA) and 114–125 (LPSTNASHSEVS). The Protein kinase domain occupies 316-607 (FIKLGVVGKG…LVHPFLNPLP (292 aa)). ATP is bound by residues 322-330 (VGKGGSSMV) and Lys345. Asp442 (proton acceptor) is an active-site residue.

The protein belongs to the protein kinase superfamily. Ser/Thr protein kinase family.

The enzyme catalyses L-seryl-[protein] + ATP = O-phospho-L-seryl-[protein] + ADP + H(+). The catalysed reaction is L-threonyl-[protein] + ATP = O-phospho-L-threonyl-[protein] + ADP + H(+). It catalyses the reaction L-tyrosyl-[protein] + ATP = O-phospho-L-tyrosyl-[protein] + ADP + H(+). Its function is as follows. Involved in mitotic spindle assembly checkpoint signaling, a process that delays anaphase until chromosomes are bioriented on the spindle, and in the repair of incorrect mitotic kinetochore-spindle microtubule attachments. Phosphorylates spc7/knl1 on MELT motifs; phosphorylation is required for recruitment of the BUB1-BUB3 complex to kinetochores. This Schizosaccharomyces pombe (strain 972 / ATCC 24843) (Fission yeast) protein is Serine/threonine-protein kinase mph1.